Reading from the N-terminus, the 208-residue chain is Somatotropin-B (208 aa).

The signal sequence occupies residues 1 to 25 (MVPGSCSSFGLLVILSFQNVPDVGG). Histidine 44 provides a ligand contact to Zn(2+). A disulfide bridge connects residues cysteine 77 and cysteine 181. Glutamate 190 lines the Zn(2+) pocket. A disulfide bond links cysteine 198 and cysteine 206.

The protein belongs to the somatotropin/prolactin family.

The protein localises to the secreted. In terms of biological role, growth hormone plays an important role in growth control. In Xenopus laevis (African clawed frog), this protein is Somatotropin-B (gh-b).